The primary structure comprises 309 residues: Tyrosine recombinase XerD (309 aa).

The 86-residue stretch at 3-88 folds into the Core-binding (CB) domain; sequence MRASLAIENF…ALRQFFRFLY (86 aa). Residues 109 to 302 form the Tyr recombinase domain; the sequence is PLPKIMSVEN…LEERLHKLVS (194 aa). Active-site residues include Arg-158, Lys-182, His-254, Arg-257, and His-280. The O-(3'-phospho-DNA)-tyrosine intermediate role is filled by Tyr-289.

It belongs to the 'phage' integrase family. XerD subfamily. In terms of assembly, forms a cyclic heterotetrameric complex composed of two molecules of XerC and two molecules of XerD.

The protein resides in the cytoplasm. Site-specific tyrosine recombinase, which acts by catalyzing the cutting and rejoining of the recombining DNA molecules. The XerC-XerD complex is essential to convert dimers of the bacterial chromosome into monomers to permit their segregation at cell division. It also contributes to the segregational stability of plasmids. The sequence is that of Tyrosine recombinase XerD from Brucella suis biovar 1 (strain 1330).